A 203-amino-acid chain; its full sequence is Urease accessory protein UreG (203 aa).

14–21 lines the GTP pocket; that stretch reads GPVGSGKT.

The protein belongs to the SIMIBI class G3E GTPase family. UreG subfamily. As to quaternary structure, homodimer. UreD, UreF and UreG form a complex that acts as a GTP-hydrolysis-dependent molecular chaperone, activating the urease apoprotein by helping to assemble the nickel containing metallocenter of UreC. The UreE protein probably delivers the nickel.

The protein localises to the cytoplasm. In terms of biological role, facilitates the functional incorporation of the urease nickel metallocenter. This process requires GTP hydrolysis, probably effectuated by UreG. This is Urease accessory protein UreG from Sinorhizobium fredii (strain NBRC 101917 / NGR234).